A 220-amino-acid chain; its full sequence is MTKKEIAKFIDHTFLKSNATHADIKKLCDEALKYSFASVCVNPYYVKVCKEYLKDSPVKVATVVGFPLGATSMKTKIFEAKEAFEDGADEIDMVINIGALLEGNVDYVYEEIKNIVDIARGYKNKIVKVIIETSELSDQQKIEACKIVMDAGADFVKTSTGFSKSGAKYEDILLMRKVVGDKIKIKASGGIRTYEDALEMIEAGASRIGTSSGVAIVSED.

The active-site Proton donor/acceptor is D92. K157 (schiff-base intermediate with acetaldehyde) is an active-site residue. Catalysis depends on K186, which acts as the Proton donor/acceptor.

The protein belongs to the DeoC/FbaB aldolase family. DeoC type 1 subfamily.

Its subcellular location is the cytoplasm. The enzyme catalyses 2-deoxy-D-ribose 5-phosphate = D-glyceraldehyde 3-phosphate + acetaldehyde. It participates in carbohydrate degradation; 2-deoxy-D-ribose 1-phosphate degradation; D-glyceraldehyde 3-phosphate and acetaldehyde from 2-deoxy-alpha-D-ribose 1-phosphate: step 2/2. In terms of biological role, catalyzes a reversible aldol reaction between acetaldehyde and D-glyceraldehyde 3-phosphate to generate 2-deoxy-D-ribose 5-phosphate. This chain is Deoxyribose-phosphate aldolase, found in Caldicellulosiruptor saccharolyticus (strain ATCC 43494 / DSM 8903 / Tp8T 6331).